Consider the following 757-residue polypeptide: RNA-directed RNA polymerase catalytic subunit (757 aa).

The disordered stretch occupies residues 53–82; that stretch reads GRWTTNTETGAPQLNPIDGPLPEDNEPSGY. Polar residues predominate over residues 55-64; sequence WTTNTETGAP. Short sequence motifs (nuclear localization signal) lie at residues 187–195 and 203–216; these read RKRRVRDNV and RTIG…NKRS. The interval 249–256 is promoter-binding site; the sequence is RGFVYFVE. A RdRp catalytic domain is found at 286–483; the sequence is VRKMMTNSQD…GINMSKKKSY (198 aa).

The protein belongs to the influenza viruses polymerase PB1 family. Influenza RNA polymerase is composed of three subunits: PB1, PB2 and PA. Interacts (via N-terminus) with PA (via C-terminus). Interacts (via C-terminus) with PB2 (via N-terminus); this interaction is essential for transcription initiation. Interacts (via C-terminus) with human PKP2 (via N-terminus); the interaction competitively inhibits the interaction between the RNA polymerase subunits PB1 and PB2. In terms of processing, phosphorylated by host PRKCA.

It is found in the host nucleus. It localises to the host cytoplasm. The catalysed reaction is RNA(n) + a ribonucleoside 5'-triphosphate = RNA(n+1) + diphosphate. RNA-dependent RNA polymerase which is responsible for replication and transcription of virus RNA segments. The transcription of viral mRNAs occurs by a unique mechanism called cap-snatching. 5' methylated caps of cellular mRNAs are cleaved after 10-13 nucleotides by PA. In turn, these short capped RNAs are used as primers by PB1 for transcription of viral mRNAs. During virus replication, PB1 initiates RNA synthesis and copy vRNA into complementary RNA (cRNA) which in turn serves as a template for the production of more vRNAs. In Influenza A virus (strain A/Hickox/1940 H1N1), this protein is RNA-directed RNA polymerase catalytic subunit.